Here is a 478-residue protein sequence, read N- to C-terminus: 3-isopropylmalate dehydratase large subunit (478 aa).

[4Fe-4S] cluster contacts are provided by cysteine 347, cysteine 407, and cysteine 410.

It belongs to the aconitase/IPM isomerase family. LeuC type 1 subfamily. In terms of assembly, heterodimer of LeuC and LeuD. The cofactor is [4Fe-4S] cluster.

It carries out the reaction (2R,3S)-3-isopropylmalate = (2S)-2-isopropylmalate. Its pathway is amino-acid biosynthesis; L-leucine biosynthesis; L-leucine from 3-methyl-2-oxobutanoate: step 2/4. Functionally, catalyzes the isomerization between 2-isopropylmalate and 3-isopropylmalate, via the formation of 2-isopropylmaleate. The chain is 3-isopropylmalate dehydratase large subunit from Prochlorococcus marinus (strain MIT 9303).